Consider the following 538-residue polypeptide: Chaperonin GroEL 1 (538 aa).

ATP contacts are provided by residues 29–32 (TLGP), 86–90 (DGTTT), Gly-413, 478–480 (NAA), and Asp-494.

This sequence belongs to the chaperonin (HSP60) family. In terms of assembly, forms a cylinder of 14 subunits composed of two heptameric rings stacked back-to-back. Interacts with the co-chaperonin GroES.

It is found in the cytoplasm. The catalysed reaction is ATP + H2O + a folded polypeptide = ADP + phosphate + an unfolded polypeptide.. Functionally, together with its co-chaperonin GroES, plays an essential role in assisting protein folding. The GroEL-GroES system forms a nano-cage that allows encapsulation of the non-native substrate proteins and provides a physical environment optimized to promote and accelerate protein folding. In Corynebacterium glutamicum (strain R), this protein is Chaperonin GroEL 1.